The following is a 210-amino-acid chain: HTH-type transcriptional regulator TtgR (210 aa).

The region spanning 10 to 70 (QETRAQIIEA…ALLDSLHETH (61 aa)) is the HTH tetR-type domain. Positions 33–52 (TLADIAELAGVTRGAIYWHF) form a DNA-binding region, H-T-H motif.

As to quaternary structure, homodimer.

Represses expression from the ttgABC operon promoter and its own expression. Binds to a promoter region between the divergently transcribed ttgR and ttgABC genes/operons; in the presence of chloramphenicol or tetracycline this binding no longer occurs and ttgR and ttgABC are derepressed. This suggests that TtgR binds these antibiotics. In Pseudomonas putida (strain DOT-T1E), this protein is HTH-type transcriptional regulator TtgR (ttgR).